Here is a 289-residue protein sequence, read N- to C-terminus: 33 kDa chaperonin (289 aa).

2 cysteine pairs are disulfide-bonded: Cys-229-Cys-231 and Cys-262-Cys-265.

This sequence belongs to the HSP33 family. Under oxidizing conditions two disulfide bonds are formed involving the reactive cysteines. Under reducing conditions zinc is bound to the reactive cysteines and the protein is inactive.

Its subcellular location is the cytoplasm. Functionally, redox regulated molecular chaperone. Protects both thermally unfolding and oxidatively damaged proteins from irreversible aggregation. Plays an important role in the bacterial defense system toward oxidative stress. The sequence is that of 33 kDa chaperonin from Pectobacterium carotovorum subsp. carotovorum (strain PC1).